A 654-amino-acid polypeptide reads, in one-letter code: Cytochrome B pre-mRNA-processing protein 1 (654 aa).

Its subcellular location is the mitochondrion. In terms of biological role, responsible for conferring a stable 5'-end on cytochrome b mRNA. This is Cytochrome B pre-mRNA-processing protein 1 (CBP1) from Saccharomyces cerevisiae (strain ATCC 204508 / S288c) (Baker's yeast).